A 384-amino-acid polypeptide reads, in one-letter code: Histidinol-phosphate aminotransferase (384 aa).

N6-(pyridoxal phosphate)lysine is present on lysine 223.

The protein belongs to the class-II pyridoxal-phosphate-dependent aminotransferase family. Requires pyridoxal 5'-phosphate as cofactor.

It carries out the reaction L-histidinol phosphate + 2-oxoglutarate = 3-(imidazol-4-yl)-2-oxopropyl phosphate + L-glutamate. The protein operates within amino-acid biosynthesis; L-histidine biosynthesis; L-histidine from 5-phospho-alpha-D-ribose 1-diphosphate: step 7/9. The polypeptide is Histidinol-phosphate aminotransferase (his3) (Schizosaccharomyces pombe (strain 972 / ATCC 24843) (Fission yeast)).